Reading from the N-terminus, the 199-residue chain is Probable GTP-binding protein EngB (199 aa).

The region spanning 28–199 is the EngB-type G domain; that stretch reads DLPEIALAGR…DSWDAILEQV (172 aa). Residues 36-43, 63-67, 81-84, 148-151, and 180-182 contribute to the GTP site; these read GRSNVGKS, GKTQL, DVPG, TKAD, and FSS. Mg(2+)-binding residues include Ser-43 and Thr-65.

Belongs to the TRAFAC class TrmE-Era-EngA-EngB-Septin-like GTPase superfamily. EngB GTPase family. Requires Mg(2+) as cofactor.

Necessary for normal cell division and for the maintenance of normal septation. The polypeptide is Probable GTP-binding protein EngB (Streptococcus pyogenes serotype M28 (strain MGAS6180)).